Consider the following 296-residue polypeptide: Ribosomal RNA small subunit methyltransferase A (296 aa).

S-adenosyl-L-methionine contacts are provided by N31, L33, G58, E79, D104, and N129.

Belongs to the class I-like SAM-binding methyltransferase superfamily. rRNA adenine N(6)-methyltransferase family. RsmA subfamily.

The protein resides in the cytoplasm. It carries out the reaction adenosine(1518)/adenosine(1519) in 16S rRNA + 4 S-adenosyl-L-methionine = N(6)-dimethyladenosine(1518)/N(6)-dimethyladenosine(1519) in 16S rRNA + 4 S-adenosyl-L-homocysteine + 4 H(+). In terms of biological role, specifically dimethylates two adjacent adenosines (A1518 and A1519) in the loop of a conserved hairpin near the 3'-end of 16S rRNA in the 30S particle. May play a critical role in biogenesis of 30S subunits. The polypeptide is Ribosomal RNA small subunit methyltransferase A (Shouchella clausii (strain KSM-K16) (Alkalihalobacillus clausii)).